The primary structure comprises 481 residues: O-phosphoseryl-tRNA(Sec) selenium transferase (481 aa).

The interval Met-1–Glu-36 is tetramerization. Arg-69 serves as a coordination point for pyridoxal 5'-phosphate. A phosphate loop (P-loop) region spans residues Gly-90–Pro-100. Residues Arg-91, Ser-92, and Gln-99 each coordinate substrate. An N6-(pyridoxal phosphate)lysine modification is found at Lys-277. Arg-306 provides a ligand contact to substrate.

The protein belongs to the SepSecS family. As to quaternary structure, homotetramer formed by a catalytic dimer and a non-catalytic dimer serving as a binding platform that orients tRNASec for catalysis. Each tetramer binds the CCA ends of two tRNAs which point to the active sites of the catalytic dimer. The cofactor is pyridoxal 5'-phosphate.

It is found in the cytoplasm. The enzyme catalyses O-phospho-L-seryl-tRNA(Sec) + selenophosphate + H2O = L-selenocysteinyl-tRNA(Sec) + 2 phosphate. It functions in the pathway aminoacyl-tRNA biosynthesis; selenocysteinyl-tRNA(Sec) biosynthesis; selenocysteinyl-tRNA(Sec) from L-seryl-tRNA(Sec) (archaeal/eukaryal route): step 2/2. Its function is as follows. Converts O-phosphoseryl-tRNA(Sec) to selenocysteinyl-tRNA(Sec) required for selenoprotein biosynthesis. This Caenorhabditis elegans protein is O-phosphoseryl-tRNA(Sec) selenium transferase (secs-1).